The sequence spans 472 residues: Meiotic spindle formation protein mei-1 (472 aa).

Residues 83–161 (HEAMTRQSGS…TQGILPQNSA (79 aa)) form a disordered region. Serine 92 carries the post-translational modification Phosphoserine; by mbk-2. 2 stretches are compositionally biased toward polar residues: residues 134 to 143 (KSTSSMSTNP) and 150 to 161 (NPTQGILPQNSA). Residues 233 to 240 (GPPGTGKT) and 351 to 352 (RR) each bind ATP.

It belongs to the AAA ATPase family. Katanin p60 subunit A1 subfamily. As to quaternary structure, homohexamer; ATP hydrolysis initiates a cycle between an open spiral and a closed ring conformation which is probably involved in pulling tubulin dimers out from microtubules. Interacts with mei-2, which may serve as a targeting subunit. Interacts with mel-26, which targets mei-1 for ubiquitin mediated proteolysis. Interacts with phosphatase pph-4.1. In terms of processing, phosphorylated. Phosphorylation by mbk-2 is required for its rapid degradation following meiosis II. Likely dephosphorylated by the PP4 complex composed of catalytic subunit pph-4.1 and regulatory subunit ppfr-1. Polyubiquitination targets the protein for rapid degradation via the ubiquitin system at the end of meiosis. The BTB domain protein mel-26 may serve to specifically target mei-1 for ubiquitination by cul-3 containing complexes. The cul-3 protein is in turn regulated by neddylation by ned-8.

Its subcellular location is the cytoplasm. The protein resides in the cytoskeleton. The protein localises to the spindle pole. It localises to the chromosome. It carries out the reaction n ATP + n H2O + a microtubule = n ADP + n phosphate + (n+1) alpha/beta tubulin heterodimers.. ATPase activity is stimulated by microtubules, which promote homooligomerization. ATP-dependent microtubule severing is stimulated by interaction with mei-2. In terms of biological role, catalytic subunit of a complex which severs microtubules in an ATP-dependent manner. Microtubule severing may promote rapid reorganization of cellular microtubule arrays. Required specifically for meiotic spindle formation in the female germline; the presence of this protein is inimical to the formation of mitotic spindles. In body wall muscles, regulates organization of myosin thick filaments. The chain is Meiotic spindle formation protein mei-1 from Caenorhabditis elegans.